The chain runs to 763 residues: Probable ubiquitin carboxyl-terminal hydrolase MINDY-4 (763 aa).

The residue at position 143 (S143) is a Phosphoserine. The segment at 154–368 is disordered; sequence SSKRSSHKSR…SQPASLRKNQ (215 aa). Positions 180 to 202 are enriched in basic and acidic residues; it reads EKTDKLPMSEPSLDTKRMGEKVR. Phosphoserine occurs at positions 220 and 224. A compositionally biased stretch (polar residues) spans 252–261; it reads ELSTHTSTCP. The span at 267–278 shows a compositional bias: low complexity; the sequence is PASSTASTSRSP. S296 is subject to Phosphoserine. The span at 346–355 shows a compositional bias: basic and acidic residues; sequence TQERPERAFE. Residues 357–368 show a composition bias toward polar residues; that stretch reads QGSQPASLRKNQ. Catalysis depends on C463, which acts as the Nucleophile. The Proton acceptor role is filled by H683.

It belongs to the MINDY deubiquitinase family. FAM188 subfamily.

The enzyme catalyses Thiol-dependent hydrolysis of ester, thioester, amide, peptide and isopeptide bonds formed by the C-terminal Gly of ubiquitin (a 76-residue protein attached to proteins as an intracellular targeting signal).. In terms of biological role, probable hydrolase that can remove 'Lys-48'-linked conjugated ubiquitin from proteins. The protein is Probable ubiquitin carboxyl-terminal hydrolase MINDY-4 (MINDY4) of Bos taurus (Bovine).